The primary structure comprises 396 residues: Elongation factor Tu (396 aa).

Positions 10–206 constitute a tr-type G domain; it reads KPHCNIGTIG…AVDSYIPQPE (197 aa). A G1 region spans residues 19 to 26; the sequence is GHVDHGKT. 19–26 provides a ligand contact to GTP; that stretch reads GHVDHGKT. T26 is a binding site for Mg(2+). The tract at residues 60 to 64 is G2; it reads GITIS. The interval 81 to 84 is G3; sequence DCPG. GTP-binding positions include 81-85 and 136-139; these read DCPGH and NKVD. The G4 stretch occupies residues 136 to 139; sequence NKVD. Positions 174 to 176 are G5; sequence SAV.

It belongs to the TRAFAC class translation factor GTPase superfamily. Classic translation factor GTPase family. EF-Tu/EF-1A subfamily. In terms of assembly, monomer.

It localises to the cytoplasm. It catalyses the reaction GTP + H2O = GDP + phosphate + H(+). Its function is as follows. GTP hydrolase that promotes the GTP-dependent binding of aminoacyl-tRNA to the A-site of ribosomes during protein biosynthesis. This is Elongation factor Tu from Rhizorhabdus wittichii (strain DSM 6014 / CCUG 31198 / JCM 15750 / NBRC 105917 / EY 4224 / RW1) (Sphingomonas wittichii).